The primary structure comprises 293 residues: 4-hydroxy-tetrahydrodipicolinate synthase (293 aa).

Thr-45 lines the pyruvate pocket. Tyr-133 (proton donor/acceptor) is an active-site residue. Lys-161 serves as the catalytic Schiff-base intermediate with substrate. Position 203 (Ile-203) interacts with pyruvate.

It belongs to the DapA family. As to quaternary structure, homotetramer; dimer of dimers.

It localises to the cytoplasm. It carries out the reaction L-aspartate 4-semialdehyde + pyruvate = (2S,4S)-4-hydroxy-2,3,4,5-tetrahydrodipicolinate + H2O + H(+). It participates in amino-acid biosynthesis; L-lysine biosynthesis via DAP pathway; (S)-tetrahydrodipicolinate from L-aspartate: step 3/4. Functionally, catalyzes the condensation of (S)-aspartate-beta-semialdehyde [(S)-ASA] and pyruvate to 4-hydroxy-tetrahydrodipicolinate (HTPA). The sequence is that of 4-hydroxy-tetrahydrodipicolinate synthase from Shewanella piezotolerans (strain WP3 / JCM 13877).